The primary structure comprises 567 residues: Asparagine--tRNA ligase, chloroplastic/mitochondrial (567 aa).

Positions 113–191 (NIMGWVRTLR…VELKVEKIIV (79 aa)) form a DNA-binding region, OB.

It belongs to the class-II aminoacyl-tRNA synthetase family.

Its subcellular location is the plastid. It is found in the chloroplast. The protein resides in the mitochondrion. It catalyses the reaction tRNA(Asn) + L-asparagine + ATP = L-asparaginyl-tRNA(Asn) + AMP + diphosphate + H(+). The sequence is that of Asparagine--tRNA ligase, chloroplastic/mitochondrial from Arabidopsis thaliana (Mouse-ear cress).